The sequence spans 340 residues: Serpentine receptor class alpha-18 (340 aa).

6 consecutive transmembrane segments (helical) span residues 29–49 (FNFIFIITVVLISYCFTWLAI), 109–129 (VFELYLYYPTGYFSTYSVFSL), 149–169 (FIATSLLVLQLLLTMFSFYIV), 198–218 (VRTGVMVSCIIVTMFVYYVCV), 249–269 (ISIVLQFSCIMISSFGSNLLI), and 285–305 (IVSFLPGVTYANLCLPLVIYF).

This sequence belongs to the nematode receptor-like protein sra family.

Its subcellular location is the membrane. The sequence is that of Serpentine receptor class alpha-18 (sra-18) from Caenorhabditis elegans.